Here is a 410-residue protein sequence, read N- to C-terminus: Platelet-activating factor acetylhydrolase IB subunit beta (410 aa).

The segment at 1 to 38 (MVLSQRQRDELNRAIADYLRSNGYEEAYSVFKKEAELD) is required for self-association and interaction with PAFAH1B2 and PAFAH1B3. The tract at residues 1 to 66 (MVLSQRQRDE…SVIRLQKKVM (66 aa)) is interaction with NDE1. An interaction with NDEL1 region spans residues 1 to 102 (MVLSQRQRDE…EWIPRPPEKY (102 aa)). Residues 7 to 39 (QRDELNRAIADYLRSNGYEEAYSVFKKEAELDM) enclose the LisH domain. Residue Lys-53 is modified to N6-acetyllysine. A coiled-coil region spans residues 56-82 (TSVIRLQKKVMELESKLNEAKEEFTSG). Residues 83–410 (GPLGQKRDPK…DQTVKVWECR (328 aa)) form an interaction with dynein and dynactin region. WD repeat units follow at residues 106-147 (GHRS…RTLK), 148-187 (GHTD…CIRT), 190-229 (GHDH…CVKT), 232-271 (GHRE…CKAE), 274-333 (EHEH…CLMT), 336-377 (GHDN…KTLN), and 378-410 (AHEH…WECR). Residue Ser-109 is modified to Phosphoserine. The tract at residues 367–409 (YKNKRCMKTLNAHEHFVTSLDFHKTAPYVVTGSVDQTVKVWEC) is interaction with DCX. Residues 388–410 (FHKTAPYVVTGSVDQTVKVWECR) form an interaction with NDEL1 region.

Belongs to the WD repeat LIS1/nudF family. Can self-associate. Component of the cytosolic PAF-AH (I) heterotetrameric enzyme, which is composed of PAFAH1B1 (beta), PAFAH1B2 (alpha2) and PAFAH1B3 (alpha1) subunits. The catalytic activity of the enzyme resides in the alpha1 (PAFAH1B3) and alpha2 (PAFAH1B2) subunits, whereas the beta subunit (PAFAH1B1) has regulatory activity. Trimer formation is not essential for the catalytic activity. Interacts with the catalytic dimer of PAF-AH (I) heterotetrameric enzyme: interacts with PAFAH1B2 homodimer (alpha2/alpha2 homodimer), PAFAH1B3 homodimer (alpha1/alpha1 homodimer) and PAFAH1B2-PAFAH1B3 heterodimer (alpha2/alpha1 heterodimer). Interacts with DCX, dynein, dynactin, IQGAP1, KATNB1, NDE1, NDEL1, NUDC and RSN. Interacts with DISC1, and this interaction is enhanced by NDEL1. Interacts with DAB1 when DAB1 is phosphorylated in response to RELN/reelin signaling. Interacts with INTS13. Interacts with DCDC1.

The protein resides in the cytoplasm. The protein localises to the cytoskeleton. It is found in the microtubule organizing center. Its subcellular location is the centrosome. It localises to the spindle. The protein resides in the nucleus membrane. Its function is as follows. Regulatory subunit (beta subunit) of the cytosolic type I platelet-activating factor (PAF) acetylhydrolase (PAF-AH (I)), an enzyme that catalyzes the hydrolyze of the acetyl group at the sn-2 position of PAF and its analogs and participates in PAF inactivation. Regulates the PAF-AH (I) activity in a catalytic dimer composition-dependent manner. Positively regulates the activity of the minus-end directed microtubule motor protein dynein. May enhance dynein-mediated microtubule sliding by targeting dynein to the microtubule plus end. Required for several dynein- and microtubule-dependent processes such as the maintenance of Golgi integrity, the peripheral transport of microtubule fragments and the coupling of the nucleus and centrosome. Required during brain development for the proliferation of neuronal precursors and the migration of newly formed neurons from the ventricular/subventricular zone toward the cortical plate. Neuronal migration involves a process called nucleokinesis, whereby migrating cells extend an anterior process into which the nucleus subsequently translocates. During nucleokinesis dynein at the nuclear surface may translocate the nucleus towards the centrosome by exerting force on centrosomal microtubules. Also required for proper activation of Rho GTPases and actin polymerization at the leading edge of locomoting cerebellar neurons and postmigratory hippocampal neurons in response to calcium influx triggered via NMDA receptors. May also play a role in other forms of cell locomotion including the migration of fibroblasts during wound healing. Required for dynein recruitment to microtubule plus ends and BICD2-bound cargos. May modulate the Reelin pathway through interaction of the PAF-AH (I) catalytic dimer with VLDLR. This chain is Platelet-activating factor acetylhydrolase IB subunit beta, found in Felis catus (Cat).